The primary structure comprises 245 residues: Protein-glutamine gamma-glutamyltransferase (245 aa).

The protein belongs to the bacillus TGase family.

The catalysed reaction is L-glutaminyl-[protein] + L-lysyl-[protein] = [protein]-L-lysyl-N(6)-5-L-glutamyl-[protein] + NH4(+). Probably plays a role in the assembly of the spore coat proteins by catalyzing epsilon-(gamma-glutamyl)lysine cross-links. In wild-type spores at 37 degrees Celsius, tgl mediates the cross-linking of GerQ in higher molecular mass forms, probably in cooperation with YabG. The protein is Protein-glutamine gamma-glutamyltransferase (tgl) of Bacillus subtilis (strain 168).